The chain runs to 469 residues: Serine hydroxymethyltransferase, cytosolic (469 aa).

Thr-20 bears the Phosphothreonine mark. Ser-26 bears the Phosphoserine mark. Residue Lys-248 is modified to N6-(pyridoxal phosphate)lysine. Ser-429 is subject to Phosphoserine. A Glycyl lysine isopeptide (Lys-Gly) (interchain with G-Cter in ubiquitin) cross-link involves residue Lys-456.

Belongs to the SHMT family. As to quaternary structure, homotetramer. The cofactor is pyridoxal 5'-phosphate.

It localises to the cytoplasm. It carries out the reaction (6R)-5,10-methylene-5,6,7,8-tetrahydrofolate + glycine + H2O = (6S)-5,6,7,8-tetrahydrofolate + L-serine. The protein operates within one-carbon metabolism; tetrahydrofolate interconversion. Functionally, interconversion of serine and glycine. The polypeptide is Serine hydroxymethyltransferase, cytosolic (Saccharomyces cerevisiae (strain ATCC 204508 / S288c) (Baker's yeast)).